Reading from the N-terminus, the 768-residue chain is C-type polyheme cytochrome OmcC (768 aa).

The first 23 residues, 1-23, serve as a signal peptide directing secretion; sequence MSRKVTKYSAVLAVSLFAAALAG. Residue Cys24 is the site of N-palmitoyl cysteine attachment. Cys24 carries S-diacylglycerol cysteine lipidation. Residues Cys48, Cys51, His52, Cys80, Cys83, His84, Cys112, Cys115, His116, Cys148, Cys151, His152, Cys193, Cys196, His197, Cys238, Cys241, His242, Cys320, Cys323, His324, Cys405, Cys408, His409, Cys454, Cys457, His458, Cys504, Cys507, His508, Cys579, Cys582, His583, Cys611, Cys614, and His615 each coordinate heme c.

Post-translationally, binds 12 heme c groups per subunit.

The protein localises to the cell outer membrane. In terms of biological role, not involved in Fe(3+) reduction. In Geobacter sulfurreducens (strain ATCC 51573 / DSM 12127 / PCA), this protein is C-type polyheme cytochrome OmcC (omcC).